A 311-amino-acid chain; its full sequence is Acetyl-coenzyme A carboxylase carboxyl transferase subunit alpha (311 aa).

Residues 36-286 (NLEKETQKVY…SDYVLKAIEE (251 aa)) form the CoA carboxyltransferase C-terminal domain.

Belongs to the AccA family. In terms of assembly, acetyl-CoA carboxylase is a heterohexamer composed of biotin carboxyl carrier protein (AccB), biotin carboxylase (AccC) and two subunits each of ACCase subunit alpha (AccA) and ACCase subunit beta (AccD).

It is found in the cytoplasm. The catalysed reaction is N(6)-carboxybiotinyl-L-lysyl-[protein] + acetyl-CoA = N(6)-biotinyl-L-lysyl-[protein] + malonyl-CoA. The protein operates within lipid metabolism; malonyl-CoA biosynthesis; malonyl-CoA from acetyl-CoA: step 1/1. Functionally, component of the acetyl coenzyme A carboxylase (ACC) complex. First, biotin carboxylase catalyzes the carboxylation of biotin on its carrier protein (BCCP) and then the CO(2) group is transferred by the carboxyltransferase to acetyl-CoA to form malonyl-CoA. The sequence is that of Acetyl-coenzyme A carboxylase carboxyl transferase subunit alpha from Campylobacter lari (strain RM2100 / D67 / ATCC BAA-1060).